The chain runs to 81 residues: Cytotoxin 4a (81 aa).

An N-terminal signal peptide occupies residues 1 to 21; sequence MKTLLLTLVVVTIVCLDLGYT. 4 disulfide bridges follow: Cys-24-Cys-42, Cys-35-Cys-59, Cys-63-Cys-74, and Cys-75-Cys-80.

This sequence belongs to the three-finger toxin family. Short-chain subfamily. Type IA cytotoxin sub-subfamily. In terms of assembly, monomer in solution; Homodimer and oligomer in the presence of negatively charged lipids forming a pore with a size ranging between 20 and 30 Angstroms. In terms of tissue distribution, expressed by the venom gland.

It localises to the secreted. It is found in the target cell membrane. Shows cytolytic activity on many different cells by forming pore in lipid membranes. In vivo, increases heart rate or kills the animal by cardiac arrest. In addition, it binds to heparin with high affinity, interacts with Kv channel-interacting protein 1 (KCNIP1) in a calcium-independent manner, and binds to integrin alpha-V/beta-3 (ITGAV/ITGB3) with moderate affinity. The sequence is that of Cytotoxin 4a from Naja sputatrix (Malayan spitting cobra).